The primary structure comprises 209 residues: MNPFYQQARFLISAARPDAFPTDEGMEVAFAGRSNAGKSSAINVLCNQRALARTSKTPGRTQLINFFALDESRRLVDLPGYGYAKVPEAMRKAWRKLMEHYLGERACLKGLVVVMDIRHPLTDHDWTMLGWARERGLAVHVLLTKADKIRRGPAMDTARQVARALGDAGIEATVQPFSALKREGVEDAHGILDQWLGLTAEPEARAASE.

The EngB-type G domain occupies 24–198 (EGMEVAFAGR…HGILDQWLGL (175 aa)). GTP contacts are provided by residues 32–39 (GRSNAGKS), 59–63 (GRTQL), 77–80 (DLPG), 144–147 (TKAD), and 177–179 (FSA). Ser39 and Thr61 together coordinate Mg(2+).

It belongs to the TRAFAC class TrmE-Era-EngA-EngB-Septin-like GTPase superfamily. EngB GTPase family. It depends on Mg(2+) as a cofactor.

In terms of biological role, necessary for normal cell division and for the maintenance of normal septation. This is Probable GTP-binding protein EngB from Thioalkalivibrio sulfidiphilus (strain HL-EbGR7).